The primary structure comprises 423 residues: D-tagatose-1,6-bisphosphate aldolase subunit GatZ (423 aa).

The protein belongs to the GatZ/KbaZ family. GatZ subfamily. As to quaternary structure, forms a complex with GatY.

The protein operates within carbohydrate metabolism; D-tagatose 6-phosphate degradation; D-glyceraldehyde 3-phosphate and glycerone phosphate from D-tagatose 6-phosphate: step 2/2. Its function is as follows. Component of the tagatose-1,6-bisphosphate aldolase GatYZ that is required for full activity and stability of the Y subunit. Could have a chaperone-like function for the proper and stable folding of GatY. When expressed alone, GatZ does not show any aldolase activity. Is involved in the catabolism of galactitol. This chain is D-tagatose-1,6-bisphosphate aldolase subunit GatZ, found in Salmonella paratyphi B (strain ATCC BAA-1250 / SPB7).